The primary structure comprises 398 residues: ATP-dependent RNA helicase eIF4A (398 aa).

Positions 25–53 (DSFDSMELKPELLRGIYAYGFERPSAIQQ) match the Q motif motif. The Helicase ATP-binding domain occupies 56-226 (ILPIIKGNDV…TKFMRDPVRI (171 aa)). 69–76 (AQSGTGKT) is a binding site for ATP. A DEAD box motif is present at residues 174–177 (DEAD). Residues 237-398 (GIKQFYIAVE…EMPMNVADLI (162 aa)) enclose the Helicase C-terminal domain.

Belongs to the DEAD box helicase family. eIF4A subfamily. In terms of assembly, component of the eIF4F complex, which composition varies with external and internal environmental conditions. It is composed of at least eIF4A, eIF4E and eIF4G.

Its subcellular location is the cytoplasm. It catalyses the reaction ATP + H2O = ADP + phosphate + H(+). In terms of biological role, ATP-dependent RNA helicase which is a subunit of the eIF4F complex involved in cap recognition and is required for mRNA binding to ribosome. In the current model of translation initiation, eIF4A unwinds RNA secondary structures in the 5'-UTR of mRNAs which is necessary to allow efficient binding of the small ribosomal subunit, and subsequent scanning for the initiator codon. The sequence is that of ATP-dependent RNA helicase eIF4A (tif1) from Neosartorya fischeri (strain ATCC 1020 / DSM 3700 / CBS 544.65 / FGSC A1164 / JCM 1740 / NRRL 181 / WB 181) (Aspergillus fischerianus).